Consider the following 445-residue polypeptide: FAS-associated factor 2-A (445 aa).

A UBA domain is found at 12–53 (EQTEKLLQFQDLTGIESMDQCRQTLQQHNWNIEAAVQDRLNE). Residues 275–353 (SERLEREERN…ERKSECLPAE (79 aa)) are a coiled coil. Positions 302 to 354 (RADQEKERKKKEKQEQKRREEEEAQRKQMLEERKKRNLEEEKERKSECLPAEP) are disordered. Over residues 303–348 (ADQEKERKKKEKQEQKRREEEEAQRKQMLEERKKRNLEEEKERKSE) the composition is skewed to basic and acidic residues. Residues 357–439 (DHPDNVKIIF…GLSQSQLLFV (83 aa)) form the UBX domain.

The protein localises to the cytoplasm. The protein resides in the lipid droplet. It is found in the endoplasmic reticulum. In terms of biological role, plays an important role in endoplasmic reticulum-associated degradation (ERAD) that mediates ubiquitin-dependent degradation of misfolded endoplasmic reticulum proteins. Involved in inhibition of lipid droplet degradation. Involved in stress granule disassembly. The sequence is that of FAS-associated factor 2-A (faf2-a) from Xenopus laevis (African clawed frog).